The chain runs to 353 residues: Chloroplastic lipocalin (353 aa).

The span at 1 to 18 (MILLSSSISLSRPVSSQS) shows a compositional bias: low complexity. Residues 1–27 (MILLSSSISLSRPVSSQSFSPPAATST) form a disordered region. The transit peptide at 1–39 (MILLSSSISLSRPVSSQSFSPPAATSTRRSHSSVTVKCC) directs the protein to the chloroplast. C163 and C299 are oxidised to a cystine.

This sequence belongs to the calycin superfamily. Lipocalin family. As to expression, expressed in leaves at low levels (at protein levels). Present in seeds.

Its subcellular location is the plastid. It is found in the chloroplast thylakoid lumen. Lipocalin that prevents thylakoidal membrane lipids peroxidation and confers protection against oxidative stress, especially mediated by singlet oxygen in response to high light and other stress (e.g. heat shocks). Required for seed longevity by ensuring polyunsaturated lipids integrity. This is Chloroplastic lipocalin from Arabidopsis thaliana (Mouse-ear cress).